We begin with the raw amino-acid sequence, 508 residues long: Beta-glucosidase 10 (508 aa).

The signal sequence occupies residues 1 to 22 (MKLYSLLSVFLVILLATSDSDA). A beta-D-glucoside contacts are provided by residues glutamine 42, histidine 142, and 187-188 (NE). Glutamate 188 acts as the Proton donor in catalysis. Cysteine 207 and cysteine 215 form a disulfide bridge. N-linked (GlcNAc...) asparagine glycosylation is found at asparagine 214 and asparagine 219. Position 331 (tyrosine 331) interacts with a beta-D-glucoside. The N-linked (GlcNAc...) asparagine glycan is linked to asparagine 365. Residue glutamate 398 participates in a beta-D-glucoside binding. Glutamate 398 functions as the Nucleophile in the catalytic mechanism. N-linked (GlcNAc...) asparagine glycosylation is present at asparagine 431. A beta-D-glucoside is bound by residues tryptophan 441 and phenylalanine 457. N-linked (GlcNAc...) asparagine glycans are attached at residues asparagine 463, asparagine 485, and asparagine 501.

This sequence belongs to the glycosyl hydrolase 1 family.

It carries out the reaction Hydrolysis of terminal, non-reducing beta-D-glucosyl residues with release of beta-D-glucose.. In Arabidopsis thaliana (Mouse-ear cress), this protein is Beta-glucosidase 10.